We begin with the raw amino-acid sequence, 149 residues long: Oligosaccharyltransferase complex subunit ostc (149 aa).

Residues 1–32 (MESLYRVPFTVLECPNLKLKKPSWLHMPSAMT) lie on the Cytoplasmic side of the membrane. A helical membrane pass occupies residues 33-53 (VYAMVVVSYFLITGGIIYDVI). The Extracellular segment spans residues 54–83 (VEPPSVGSMTDEHGHQRPVAFLAYRVNGQY). A helical membrane pass occupies residues 84 to 104 (IMEGLASSFLFTMGGLGFIIL). Residues 105–117 (DRSNAPNIPKLNR) lie on the Cytoplasmic side of the membrane. Residues 118-138 (FLLLFIGFVCVLLSFFMARVF) form a helical membrane-spanning segment. At 139–149 (MRMKLPGYLMG) the chain is on the extracellular side.

It belongs to the OSTC family. Specific component of the STT3A-containing form of the oligosaccharyltransferase (OST) complex.

Its subcellular location is the membrane. It functions in the pathway protein modification; protein glycosylation. Specific component of the STT3A-containing form of the oligosaccharyl transferase (OST) complex that catalyzes the initial transfer of a defined glycan (Glc(3)Man(9)GlcNAc(2) in eukaryotes) from the lipid carrier dolichol-pyrophosphate to an asparagine residue within an Asn-X-Ser/Thr consensus motif in nascent polypeptide chains, the first step in protein N-glycosylation. N-glycosylation occurs cotranslationally and the complex associates with the Sec61 complex at the channel-forming translocon complex that mediates protein translocation across the endoplasmic reticulum (ER). All subunits are required for a maximal enzyme activity. The polypeptide is Oligosaccharyltransferase complex subunit ostc (Xenopus tropicalis (Western clawed frog)).